Reading from the N-terminus, the 137-residue chain is Small ribosomal subunit protein uS12 (137 aa).

The disordered stretch occupies residues 33-57; sequence KVQTNVSSPQKRGVATRVGTMTPKK. At Asp102 the chain carries 3-methylthioaspartic acid.

It belongs to the universal ribosomal protein uS12 family. Part of the 30S ribosomal subunit. Contacts proteins S8 and S17. May interact with IF1 in the 30S initiation complex.

With S4 and S5 plays an important role in translational accuracy. Functionally, interacts with and stabilizes bases of the 16S rRNA that are involved in tRNA selection in the A site and with the mRNA backbone. Located at the interface of the 30S and 50S subunits, it traverses the body of the 30S subunit contacting proteins on the other side and probably holding the rRNA structure together. The combined cluster of proteins S8, S12 and S17 appears to hold together the shoulder and platform of the 30S subunit. The chain is Small ribosomal subunit protein uS12 from Streptococcus thermophilus (strain CNRZ 1066).